The primary structure comprises 168 residues: Pathogenesis-related protein 1C (168 aa).

A signal peptide spans 1-30; it reads MEFVLFSQMSSFFLVSTLLLFLIISHSCHA. The SCP domain occupies 38–156; sequence LDAHNTARAD…NGGYIVSCNY (119 aa).

Belongs to the CRISP family. In terms of processing, three disulfide bonds are present.

It localises to the vacuole. Probably involved in the defense reaction of plants against pathogens. The protein is Pathogenesis-related protein 1C of Nicotiana tabacum (Common tobacco).